The sequence spans 282 residues: Probable endonuclease 4 (282 aa).

Positions 70, 110, 146, 180, 183, 217, 230, 232, and 262 each coordinate Zn(2+).

Belongs to the AP endonuclease 2 family. The cofactor is Zn(2+).

The catalysed reaction is Endonucleolytic cleavage to 5'-phosphooligonucleotide end-products.. In terms of biological role, endonuclease IV plays a role in DNA repair. It cleaves phosphodiester bonds at apurinic or apyrimidinic (AP) sites, generating a 3'-hydroxyl group and a 5'-terminal sugar phosphate. The chain is Probable endonuclease 4 from Wolinella succinogenes (strain ATCC 29543 / DSM 1740 / CCUG 13145 / JCM 31913 / LMG 7466 / NCTC 11488 / FDC 602W) (Vibrio succinogenes).